Here is a 320-residue protein sequence, read N- to C-terminus: Cytochrome f (320 aa).

A signal peptide spans 1–35 (MENRNTFSWVKEQMTRSISVSIMIYVITRTSISNA). Tyr-36, Cys-56, Cys-59, and His-60 together coordinate heme. A helical membrane pass occupies residues 286–306 (VQGLLFFFASVILAQVFLVLK).

It belongs to the cytochrome f family. The 4 large subunits of the cytochrome b6-f complex are cytochrome b6, subunit IV (17 kDa polypeptide, petD), cytochrome f and the Rieske protein, while the 4 small subunits are PetG, PetL, PetM and PetN. The complex functions as a dimer. The cofactor is heme.

Its subcellular location is the plastid. It is found in the chloroplast thylakoid membrane. Functionally, component of the cytochrome b6-f complex, which mediates electron transfer between photosystem II (PSII) and photosystem I (PSI), cyclic electron flow around PSI, and state transitions. This Oryza nivara (Indian wild rice) protein is Cytochrome f.